The following is a 125-amino-acid chain: Protein ApaG (125 aa).

One can recognise an ApaG domain in the interval 1–125 (MINAPRVCVQ…FRLAIPSLIH (125 aa)).

In Pectobacterium atrosepticum (strain SCRI 1043 / ATCC BAA-672) (Erwinia carotovora subsp. atroseptica), this protein is Protein ApaG.